The following is a 166-amino-acid chain: Large ribosomal subunit protein uL10 (166 aa).

This sequence belongs to the universal ribosomal protein uL10 family. Part of the ribosomal stalk of the 50S ribosomal subunit. The N-terminus interacts with L11 and the large rRNA to form the base of the stalk. The C-terminus forms an elongated spine to which L12 dimers bind in a sequential fashion forming a multimeric L10(L12)X complex.

Forms part of the ribosomal stalk, playing a central role in the interaction of the ribosome with GTP-bound translation factors. The protein is Large ribosomal subunit protein uL10 of Listeria monocytogenes serotype 4b (strain CLIP80459).